The following is a 143-amino-acid chain: Putative pre-16S rRNA nuclease (143 aa).

Belongs to the YqgF nuclease family.

It localises to the cytoplasm. Functionally, could be a nuclease involved in processing of the 5'-end of pre-16S rRNA. The chain is Putative pre-16S rRNA nuclease from Lactobacillus gasseri (strain ATCC 33323 / DSM 20243 / BCRC 14619 / CIP 102991 / JCM 1131 / KCTC 3163 / NCIMB 11718 / NCTC 13722 / AM63).